The sequence spans 349 residues: GMP reductase (349 aa).

Ile-108–Ala-131 is an NADP(+) binding site. Gly-181 and Gly-183 together coordinate K(+). The Thioimidate intermediate role is filled by Cys-186. Ile-216–Val-239 lines the NADP(+) pocket.

Belongs to the IMPDH/GMPR family. GuaC type 1 subfamily. As to quaternary structure, homotetramer.

The catalysed reaction is IMP + NH4(+) + NADP(+) = GMP + NADPH + 2 H(+). Catalyzes the irreversible NADPH-dependent deamination of GMP to IMP. It functions in the conversion of nucleobase, nucleoside and nucleotide derivatives of G to A nucleotides, and in maintaining the intracellular balance of A and G nucleotides. The polypeptide is GMP reductase (Buchnera aphidicola subsp. Acyrthosiphon pisum (strain 5A)).